A 140-amino-acid polypeptide reads, in one-letter code: Profilin-2 (140 aa).

Ala-2 is subject to N-acetylalanine.

The protein belongs to the profilin family. In terms of assembly, occurs in many kinds of cells as a complex with monomeric actin in a 1:1 ratio. Interacts with PFN2. Interacts with ACTMAP (via N-terminus); the interaction may facilitate efficient cleavage of the acetylated N-terminus of immature actin by ACTMAP.

The protein localises to the cytoplasm. Its subcellular location is the cytoskeleton. Functionally, binds to actin and affects the structure of the cytoskeleton. At high concentrations, profilin prevents the polymerization of actin, whereas it enhances it at low concentrations. By binding to PIP2, it inhibits the formation of IP3 and DG. The chain is Profilin-2 (PFN2) from Bos taurus (Bovine).